The chain runs to 610 residues: Phosphoenolpyruvate carboxykinase [GTP] (610 aa).

Substrate contacts are provided by residues Arg82 and 221-223; that span reads YGG. Mn(2+)-binding residues include Lys230 and His250. Residue Ser272 participates in substrate binding. 273-278 provides a ligand contact to GTP; it reads ACGKTN. Cys274 is a catalytic residue. Asp297 provides a ligand contact to Mn(2+). Substrate is bound at residue 387–389; sequence NSR. Residues Arg389, Arg420, and 515–518 each bind GTP; that span reads FGDN.

It belongs to the phosphoenolpyruvate carboxykinase [GTP] family. As to quaternary structure, monomer. It depends on Mn(2+) as a cofactor.

The protein localises to the cytoplasm. It carries out the reaction oxaloacetate + GTP = phosphoenolpyruvate + GDP + CO2. Its pathway is carbohydrate biosynthesis; gluconeogenesis. In terms of biological role, catalyzes the conversion of oxaloacetate (OAA) to phosphoenolpyruvate (PEP), the rate-limiting step in the metabolic pathway that produces glucose from lactate and other precursors derived from the citric acid cycle. The sequence is that of Phosphoenolpyruvate carboxykinase [GTP] from Corynebacterium glutamicum (strain R).